Here is a 265-residue protein sequence, read N- to C-terminus: Thiazole synthase (265 aa).

The active-site Schiff-base intermediate with DXP is Lys103. Residues Gly164, 190-191 (AG), and 212-213 (NT) contribute to the 1-deoxy-D-xylulose 5-phosphate site.

This sequence belongs to the ThiG family. In terms of assembly, homotetramer. Forms heterodimers with either ThiH or ThiS.

It localises to the cytoplasm. The enzyme catalyses [ThiS sulfur-carrier protein]-C-terminal-Gly-aminoethanethioate + 2-iminoacetate + 1-deoxy-D-xylulose 5-phosphate = [ThiS sulfur-carrier protein]-C-terminal Gly-Gly + 2-[(2R,5Z)-2-carboxy-4-methylthiazol-5(2H)-ylidene]ethyl phosphate + 2 H2O + H(+). Its pathway is cofactor biosynthesis; thiamine diphosphate biosynthesis. Functionally, catalyzes the rearrangement of 1-deoxy-D-xylulose 5-phosphate (DXP) to produce the thiazole phosphate moiety of thiamine. Sulfur is provided by the thiocarboxylate moiety of the carrier protein ThiS. In vitro, sulfur can be provided by H(2)S. This Bordetella pertussis (strain Tohama I / ATCC BAA-589 / NCTC 13251) protein is Thiazole synthase.